The sequence spans 501 residues: MSSGQQPPRRVTNVGSLLLTPQENESLFSFLGKKCVTMSSAVVQLYAADRNCMWSKKCSGVACLVKDNPQRSYFLRIFDIKDGKLLWEQELYNNFVYNSPRGYFHTFAGDTCQVALNFANEEEAKKFRKAVTDLLGRRQRKSEKRRDAPNGPNLPMATVDIKNPEITTNRFYSSQVNNISHTKEKKKGKAKKKRLTKADIGTPSNFQHIGHVGWDPNTGFDLNNLDPELKNLFDMCGISEAQLKDRETSKVIYDFIEKTGGVEAVKNELRRQAPPPPPPSRGGPPPPPPPPHSSGPPPPPARGRGAPPPPPSRAPTAAPPPPPPSRPGVVVPPPPPNRMYPPPPPALPSSAPSGPPPPPPLSMAGSTAPPPPPPPPPPPGPPPPPGLPSDGDHQVPASSGNKAALLDQIREGAQLKKVEQNSRPVSCSGRDALLDQIRQGIQLKSVSDGQESTPPTPAPTSGIVGALMEVMQKRSKAIHSSDEDEDDDDEEDFQDDDEWED.

Ser-2 is modified (N-acetylserine). A WH1 domain is found at 31–138 (LGKKCVTMSS…KAVTDLLGRR (108 aa)). Disordered stretches follow at residues 135–158 (LGRR…PMAT) and 180–202 (SHTK…DIGT). Residues 183–195 (KEKKKGKAKKKRL) are compositionally biased toward basic residues. The 14-residue stretch at 200-213 (IGTPSNFQHIGHVG) folds into the CRIB domain. Phosphoserine; by TNK2 is present on Ser-239. Tyr-253 carries the post-translational modification Phosphotyrosine; by FAK1 and TNK2. Disordered stretches follow at residues 263 to 405 (EAVK…KAAL) and 442 to 501 (QLKS…EWED). 2 stretches are compositionally biased toward pro residues: residues 273–361 (APPP…PPPL) and 368–387 (APPP…PPGL). Arg-304 carries the post-translational modification Omega-N-methylarginine. WH2 domains lie at 401-418 (NKAA…LKKV) and 429-446 (GRDA…LKSV). The segment covering 442-453 (QLKSVSDGQEST) has biased composition (polar residues). Residues Ser-480 and Ser-481 each carry the phosphoserine modification. Positions 482 to 501 (DEDEDDDDEEDFQDDDEWED) are enriched in acidic residues.

In terms of assembly, binds actin and the Arp2/3 complex. Interacts with CDC42. Interacts with FCHSD1. Interacts with FCHSD2. Binds to SH3 domains of GRB2. Interacts with the C-terminal SH3 domain of DNMBP. Interacts with SNX9. Interacts with the WW domains of PRPF40A/FBP11. Interacts with PTK2/FAK1. Interacts with PACSIN1, PACSIN2 and PACSIN3. Interacts with NOSTRIN. Binds to TNK2. Interacts with SNX33. Interacts with NONO (via second RRM domain); the interaction is direct. Component of a multiprotein complex with NONO and SFPQ; associates with the complex via direct interaction with NONO. Post-translationally, phosphorylation at Ser-239, Tyr-253, Ser-480 and Ser-481 enhances actin polymerization activity.

Its subcellular location is the cytoplasm. It localises to the cytoskeleton. The protein resides in the nucleus. Regulates actin polymerization by stimulating the actin-nucleating activity of the Arp2/3 complex. Involved in various processes, such as mitosis and cytokinesis, via its role in the regulation of actin polymerization. Together with CDC42, involved in the extension and maintenance of the formation of thin, actin-rich surface projections called filopodia. In addition to its role in the cytoplasm, also plays a role in the nucleus by regulating gene transcription, probably by promoting nuclear actin polymerization. Binds to HSF1/HSTF1 and forms a complex on heat shock promoter elements (HSE) that negatively regulates HSP90 expression. Plays a role in dendrite spine morphogenesis. The polypeptide is Actin nucleation-promoting factor WASL (Wasl) (Rattus norvegicus (Rat)).